A 107-amino-acid polypeptide reads, in one-letter code: UPF0060 membrane protein glr4174 (107 aa).

4 helical membrane-spanning segments follow: residues 1–21 (MALL…FAFW), 26–46 (LGKN…FAWL), 58–78 (AYAA…WLVE), and 87–107 (LAGA…DRSP).

The protein belongs to the UPF0060 family.

It is found in the cell inner membrane. The protein is UPF0060 membrane protein glr4174 of Gloeobacter violaceus (strain ATCC 29082 / PCC 7421).